Here is a 1068-residue protein sequence, read N- to C-terminus: Carbamoyl phosphate synthase large chain (1068 aa).

A carboxyphosphate synthetic domain region spans residues 1–401 (MPLNKDIKKV…AFLKGIRSLE (401 aa)). Positions 129, 169, 175, 176, 208, 210, 215, 241, 242, 243, 284, and 298 each coordinate ATP. In terms of domain architecture, ATP-grasp 1 spans 133–327 (RNVMSRINEP…IAKVAAKIAL (195 aa)). Positions 284, 298, and 300 each coordinate Mg(2+). Mn(2+) is bound by residues Gln284, Glu298, and Asn300. The oligomerization domain stretch occupies residues 402-549 (IGKYSLEHKK…YSTYDVYDEV (148 aa)). Residues 550-932 (EVSKNKKVIV…ALYKGFIGAN (383 aa)) are carbamoyl phosphate synthetic domain. Residues 674–864 (DELLEKLQIS…IVDIATRVML (191 aa)) enclose the ATP-grasp 2 domain. Residues Arg710, Lys749, Leu751, Glu755, Gly780, Val781, His782, Ser783, Gln823, and Glu835 each coordinate ATP. Residues Gln823, Glu835, and Asn837 each contribute to the Mg(2+) site. Mn(2+) contacts are provided by Gln823, Glu835, and Asn837. The region spanning 933 to 1068 (MSIKKEKGTI…ETLHIFDLSN (136 aa)) is the MGS-like domain. The interval 933 to 1068 (MSIKKEKGTI…ETLHIFDLSN (136 aa)) is allosteric domain.

It belongs to the CarB family. Composed of two chains; the small (or glutamine) chain promotes the hydrolysis of glutamine to ammonia, which is used by the large (or ammonia) chain to synthesize carbamoyl phosphate. Tetramer of heterodimers (alpha,beta)4. Mg(2+) is required as a cofactor. Mn(2+) serves as cofactor.

The catalysed reaction is hydrogencarbonate + L-glutamine + 2 ATP + H2O = carbamoyl phosphate + L-glutamate + 2 ADP + phosphate + 2 H(+). It carries out the reaction hydrogencarbonate + NH4(+) + 2 ATP = carbamoyl phosphate + 2 ADP + phosphate + 2 H(+). It participates in amino-acid biosynthesis; L-arginine biosynthesis; carbamoyl phosphate from bicarbonate: step 1/1. It functions in the pathway pyrimidine metabolism; UMP biosynthesis via de novo pathway; (S)-dihydroorotate from bicarbonate: step 1/3. In terms of biological role, large subunit of the glutamine-dependent carbamoyl phosphate synthetase (CPSase). CPSase catalyzes the formation of carbamoyl phosphate from the ammonia moiety of glutamine, carbonate, and phosphate donated by ATP, constituting the first step of 2 biosynthetic pathways, one leading to arginine and/or urea and the other to pyrimidine nucleotides. The large subunit (synthetase) binds the substrates ammonia (free or transferred from glutamine from the small subunit), hydrogencarbonate and ATP and carries out an ATP-coupled ligase reaction, activating hydrogencarbonate by forming carboxy phosphate which reacts with ammonia to form carbamoyl phosphate. The polypeptide is Carbamoyl phosphate synthase large chain (Clostridium botulinum (strain Loch Maree / Type A3)).